A 142-amino-acid chain; its full sequence is Putative pre-16S rRNA nuclease (142 aa).

This sequence belongs to the YqgF nuclease family.

The protein resides in the cytoplasm. Functionally, could be a nuclease involved in processing of the 5'-end of pre-16S rRNA. The protein is Putative pre-16S rRNA nuclease of Staphylococcus aureus (strain JH1).